The primary structure comprises 361 residues: Phosphoserine aminotransferase (361 aa).

L-glutamate is bound at residue arginine 42. Pyridoxal 5'-phosphate contacts are provided by residues alanine 76–arginine 77, tryptophan 102, threonine 153, aspartate 173, and glutamine 196. Lysine 197 bears the N6-(pyridoxal phosphate)lysine mark. Asparagine 238 to threonine 239 is a binding site for pyridoxal 5'-phosphate.

It belongs to the class-V pyridoxal-phosphate-dependent aminotransferase family. SerC subfamily. As to quaternary structure, homodimer. Pyridoxal 5'-phosphate serves as cofactor.

It is found in the cytoplasm. The enzyme catalyses O-phospho-L-serine + 2-oxoglutarate = 3-phosphooxypyruvate + L-glutamate. It catalyses the reaction 4-(phosphooxy)-L-threonine + 2-oxoglutarate = (R)-3-hydroxy-2-oxo-4-phosphooxybutanoate + L-glutamate. Its pathway is amino-acid biosynthesis; L-serine biosynthesis; L-serine from 3-phospho-D-glycerate: step 2/3. It participates in cofactor biosynthesis; pyridoxine 5'-phosphate biosynthesis; pyridoxine 5'-phosphate from D-erythrose 4-phosphate: step 3/5. Its function is as follows. Catalyzes the reversible conversion of 3-phosphohydroxypyruvate to phosphoserine and of 3-hydroxy-2-oxo-4-phosphonooxybutanoate to phosphohydroxythreonine. The chain is Phosphoserine aminotransferase from Yersinia pestis bv. Antiqua (strain Angola).